Consider the following 315-residue polypeptide: Thioredoxin reductase (315 aa).

Residue E34 to Q41 participates in FAD binding. A disulfide bond links C134 and C137. D282–V291 contributes to the FAD binding site.

It belongs to the class-II pyridine nucleotide-disulfide oxidoreductase family. As to quaternary structure, homodimer. Requires FAD as cofactor.

Its subcellular location is the cytoplasm. It carries out the reaction [thioredoxin]-dithiol + NADP(+) = [thioredoxin]-disulfide + NADPH + H(+). This Peptoclostridium acidaminophilum (Eubacterium acidaminophilum) protein is Thioredoxin reductase (trxB).